Reading from the N-terminus, the 93-residue chain is MARSIKKGPFVDDHVAKKVAAESAGSKKVIKTWSRRSTITPDFIGLTFAVHNGKKFIPVFVTENMVGHKLGEFAPTRTFHGHAADKKSKLKKK.

This sequence belongs to the universal ribosomal protein uS19 family.

In terms of biological role, protein S19 forms a complex with S13 that binds strongly to the 16S ribosomal RNA. The chain is Small ribosomal subunit protein uS19 from Geobacter sulfurreducens (strain ATCC 51573 / DSM 12127 / PCA).